A 332-amino-acid chain; its full sequence is DNA double-strand break repair nuclease NurA (332 aa).

Mn(2+)-binding residues include D57 and D132.

Belongs to the NurA family. Requires Mn(2+) as cofactor.

Functionally, involved in DNA double-strand break (DSB) repair. Probably acts with HerA to stimulate resection of the 5' strand and produce the long 3' single-strand that is required for RadA loading. Exhibits both single-stranded endonuclease activity and 5'-3' exonuclease activity on single-stranded and double-stranded DNA. The chain is DNA double-strand break repair nuclease NurA from Sulfolobus acidocaldarius (strain ATCC 33909 / DSM 639 / JCM 8929 / NBRC 15157 / NCIMB 11770).